The sequence spans 31 residues: Photosystem II reaction center protein Psb30 (31 aa).

Residues 5–25 (IQLTSLLLIVIAGPLVIALLF) traverse the membrane as a helical segment.

It belongs to the Psb30/Ycf12 family. As to quaternary structure, PSII is composed of 1 copy each of membrane proteins PsbA, PsbB, PsbC, PsbD, PsbE, PsbF, PsbH, PsbI, PsbJ, PsbK, PsbL, PsbM, PsbT, PsbX, PsbY, PsbZ, Psb30/Ycf12, peripheral proteins of the oxygen-evolving complex and a large number of cofactors. It forms dimeric complexes.

It localises to the plastid. The protein localises to the chloroplast thylakoid membrane. Its function is as follows. A core subunit of photosystem II (PSII), probably helps stabilize the reaction center. This is Photosystem II reaction center protein Psb30 from Phacus acuminatus.